The chain runs to 332 residues: DNA-directed RNA polymerase subunit alpha (332 aa).

Positions 1-244 (MKKHAKVYYS…AHLNLLADVE (244 aa)) are alpha N-terminal domain (alpha-NTD). Residues 259–332 (IKEEPIRRFS…NYKNENKGEN (74 aa)) form an alpha C-terminal domain (alpha-CTD) region.

The protein belongs to the RNA polymerase alpha chain family. In terms of assembly, homodimer. The RNAP catalytic core consists of 2 alpha, 1 beta, 1 beta' and 1 omega subunit. When a sigma factor is associated with the core the holoenzyme is formed, which can initiate transcription.

It catalyses the reaction RNA(n) + a ribonucleoside 5'-triphosphate = RNA(n+1) + diphosphate. In terms of biological role, DNA-dependent RNA polymerase catalyzes the transcription of DNA into RNA using the four ribonucleoside triphosphates as substrates. The sequence is that of DNA-directed RNA polymerase subunit alpha from Mesomycoplasma hyopneumoniae (strain 232) (Mycoplasma hyopneumoniae).